Consider the following 293-residue polypeptide: Ribosomal protein L11 methyltransferase (293 aa).

S-adenosyl-L-methionine-binding residues include Thr-145, Gly-166, Asp-188, and Asn-230.

Belongs to the methyltransferase superfamily. PrmA family.

Its subcellular location is the cytoplasm. It catalyses the reaction L-lysyl-[protein] + 3 S-adenosyl-L-methionine = N(6),N(6),N(6)-trimethyl-L-lysyl-[protein] + 3 S-adenosyl-L-homocysteine + 3 H(+). Its function is as follows. Methylates ribosomal protein L11. This chain is Ribosomal protein L11 methyltransferase, found in Shewanella baltica (strain OS223).